The chain runs to 412 residues: Probable ribonuclease FAU-1 (412 aa).

It belongs to the FAU-1 family.

Functionally, probable RNase involved in rRNA stability through maturation and/or degradation of precursor rRNAs. Binds to RNA in loop regions with AU-rich sequences. The polypeptide is Probable ribonuclease FAU-1 (Sulfurisphaera tokodaii (strain DSM 16993 / JCM 10545 / NBRC 100140 / 7) (Sulfolobus tokodaii)).